Consider the following 284-residue polypeptide: Neutral protease 2 homolog AFLA_119780 (284 aa).

Cystine bridges form between Cys-113–Cys-185 and Cys-192–Cys-210. His-235 contacts Zn(2+). Glu-236 is a catalytic residue. Zn(2+) contacts are provided by His-239 and Asp-250.

Belongs to the peptidase M35 family. Zn(2+) serves as cofactor.

The protein resides in the secreted. The enzyme catalyses Preferential cleavage of bonds with hydrophobic residues in P1'. Also 3-Asn-|-Gln-4 and 8-Gly-|-Ser-9 bonds in insulin B chain.. Secreted metalloproteinase that allows assimilation of proteinaceous substrates. Shows high activities on basic nuclear substrates such as histone and protamine. The protein is Neutral protease 2 homolog AFLA_119780 of Aspergillus flavus (strain ATCC 200026 / FGSC A1120 / IAM 13836 / NRRL 3357 / JCM 12722 / SRRC 167).